The sequence spans 203 residues: Small ribosomal subunit protein uS2 (203 aa).

Belongs to the universal ribosomal protein uS2 family.

This Methanopyrus kandleri (strain AV19 / DSM 6324 / JCM 9639 / NBRC 100938) protein is Small ribosomal subunit protein uS2.